Consider the following 364-residue polypeptide: MAQQTPLYEQHTLCGARMVDFHGWMMPLHYGSQLDEHHAVRTDAGMFDVSHMTIVDLHGSRTREFLRYLLANDVAKLTKTGKALYSGMLNASGGVIDDLIVYYFTEDFFRLVVNSATREKDLAWITQHAEPYAIDITVRDDLSLIAVQGPNAQEKAATLFTEEQRNAVEGMKPFFGVQAGDLFIATTGYTGEAGYEIAMPNEKAADFWRALVEAGVKPCGLGARDTLRLEAGMNLYGQEMDEGISPLAANMGWTIAWEPTDRDFIGREALEMQREKGHEQLVGLVMTEKGVLRNELPVRFTDAQGNQQEGIITSGTFSPTLGYSIALARVPAGIGETAIVQIRNREMPVKVTKPVFVRNGKAVA.

This sequence belongs to the GcvT family. As to quaternary structure, the glycine cleavage system is composed of four proteins: P, T, L and H.

It carries out the reaction N(6)-[(R)-S(8)-aminomethyldihydrolipoyl]-L-lysyl-[protein] + (6S)-5,6,7,8-tetrahydrofolate = N(6)-[(R)-dihydrolipoyl]-L-lysyl-[protein] + (6R)-5,10-methylene-5,6,7,8-tetrahydrofolate + NH4(+). Its function is as follows. The glycine cleavage system catalyzes the degradation of glycine. This is Aminomethyltransferase from Salmonella arizonae (strain ATCC BAA-731 / CDC346-86 / RSK2980).